We begin with the raw amino-acid sequence, 554 residues long: (+)-delta-cadinene synthase isozyme XC1 (554 aa).

Low complexity predominate over residues 1 to 16 (MASQVSQMPSSSPLSS). Positions 1–23 (MASQVSQMPSSSPLSSNKDEMRP) are disordered. Residues Asp307, Asp311, Asp451, and Glu455 each coordinate Mg(2+). The short motif at 307–311 (DDTYD) is the DDXXD motif element.

This sequence belongs to the terpene synthase family. Mg(2+) serves as cofactor.

It carries out the reaction (2E,6E)-farnesyl diphosphate = (1S,8aR)-delta-cadinene + diphosphate. The protein operates within secondary metabolite biosynthesis; terpenoid biosynthesis. Its function is as follows. Responsible for the cyclization of trans,trans-farnesyl diphosphate (FPP) to (+)-delta cadinene. In Gossypium arboreum (Tree cotton), this protein is (+)-delta-cadinene synthase isozyme XC1.